Consider the following 238-residue polypeptide: Isoprene-epoxide--glutathione S-transferase (238 aa).

The GST N-terminal domain maps to 7–82; the sequence is YVPAWGIPDI…YLKNKFGDKL (76 aa). One can recognise a GST C-terminal domain in the interval 118–238; sequence DAGWETYIPF…LERIRKQYDI (121 aa).

Belongs to the GST superfamily. As to quaternary structure, homodimer.

The catalysed reaction is 2-glutathionyl-2-methylbut-3-en-1-ol = (3R)-3,4-epoxy-3-methylbut-1-ene + glutathione. Its activity is regulated as follows. Activity is inhibited by 1,2-epoxyhexane. Its function is as follows. Involved in isoprene degradation. Catalyzes the glutathione-dependent ring opening of various epoxides. The highest conversion rate is observed with the physiological substrate, 3,4-epoxy-3-methyl-1-butene, which is the primary oxidation product of isoprene. It can also use other epoxides, including epoxyethane, epoxypropane, epithiopropane, epichlorohydrin, epifluorohydrin, epibromohydrin, 1,2-epoxybutane, 1,2-epoxyhexane, cis-2,3-epoxybutane, cis-1,2-dichloroepoxyethane and trans-1,2-dichloroepoxyethane. The protein is Isoprene-epoxide--glutathione S-transferase of Rhodococcus sp. (strain AD45).